Consider the following 253-residue polypeptide: 7-carboxy-7-deazaguanine synthase (253 aa).

Residues W12–G14 and R32 each bind substrate. The Radical SAM core domain occupies A23 to L253. C36, C40, and C43 together coordinate [4Fe-4S] cluster. Position 45 (S45) interacts with Mg(2+). T98 serves as a coordination point for substrate. S-adenosyl-L-methionine is bound at residue G100.

This sequence belongs to the radical SAM superfamily. 7-carboxy-7-deazaguanine synthase family. As to quaternary structure, homodimer. Requires [4Fe-4S] cluster as cofactor. S-adenosyl-L-methionine serves as cofactor. The cofactor is Mg(2+).

It catalyses the reaction 6-carboxy-5,6,7,8-tetrahydropterin + H(+) = 7-carboxy-7-deazaguanine + NH4(+). The protein operates within purine metabolism; 7-cyano-7-deazaguanine biosynthesis. Catalyzes the complex heterocyclic radical-mediated conversion of 6-carboxy-5,6,7,8-tetrahydropterin (CPH4) to 7-carboxy-7-deazaguanine (CDG), a step common to the biosynthetic pathways of all 7-deazapurine-containing compounds. In Thermococcus kodakarensis (strain ATCC BAA-918 / JCM 12380 / KOD1) (Pyrococcus kodakaraensis (strain KOD1)), this protein is 7-carboxy-7-deazaguanine synthase.